Here is a 472-residue protein sequence, read N- to C-terminus: GTPase Der (472 aa).

2 consecutive EngA-type G domains span residues 3–166 (PIIA…IQNN) and 188–361 (IKLA…HCST). Residues 9–16 (GRPNVGKS), 56–60 (DTGGI), 118–121 (NKID), 194–201 (GSSNVGKS), 241–245 (DTAGL), and 306–309 (NKWD) contribute to the GTP site. One can recognise a KH-like domain in the interval 362-446 (KRISTALLTK…PIRIQFNEPA (85 aa)).

Belongs to the TRAFAC class TrmE-Era-EngA-EngB-Septin-like GTPase superfamily. EngA (Der) GTPase family. As to quaternary structure, associates with the 50S ribosomal subunit.

GTPase that plays an essential role in the late steps of ribosome biogenesis. The polypeptide is GTPase Der (Baumannia cicadellinicola subsp. Homalodisca coagulata).